Consider the following 301-residue polypeptide: uncharacterized protein (301 aa).

The Radical SAM core domain maps to 45-286; sequence KELSDGWALN…EELGKMFTEL (242 aa).

This is an uncharacterized protein from Acidianus two-tailed virus (ATV).